Consider the following 282-residue polypeptide: Bifunctional protein FolD (282 aa).

NADP(+) is bound by residues 164–166 (GAS), Ile-189, and Ile-230.

This sequence belongs to the tetrahydrofolate dehydrogenase/cyclohydrolase family. In terms of assembly, homodimer.

The enzyme catalyses (6R)-5,10-methylene-5,6,7,8-tetrahydrofolate + NADP(+) = (6R)-5,10-methenyltetrahydrofolate + NADPH. It carries out the reaction (6R)-5,10-methenyltetrahydrofolate + H2O = (6R)-10-formyltetrahydrofolate + H(+). It participates in one-carbon metabolism; tetrahydrofolate interconversion. In terms of biological role, catalyzes the oxidation of 5,10-methylenetetrahydrofolate to 5,10-methenyltetrahydrofolate and then the hydrolysis of 5,10-methenyltetrahydrofolate to 10-formyltetrahydrofolate. The protein is Bifunctional protein FolD of Campylobacter jejuni (strain RM1221).